The following is a 191-amino-acid chain: Adenylate kinase (191 aa).

Position 11–16 (11–16 (GSGKGT)) interacts with ATP. Residues 31 to 60 (STGEILRREIKDKTELGKIAEEYINQGQLL) form an NMP region. Residues Thr-32, Arg-37, 58-60 (QLL), 86-89 (GFPR), and Gln-93 each bind AMP. The segment at 127–137 (KRGKLFSRKDD) is LID. Arg-128 is an ATP binding site. AMP-binding residues include Arg-134 and Arg-145. Asn-173 lines the ATP pocket.

This sequence belongs to the adenylate kinase family. Monomer.

It is found in the cytoplasm. The enzyme catalyses AMP + ATP = 2 ADP. The protein operates within purine metabolism; AMP biosynthesis via salvage pathway; AMP from ADP: step 1/1. In terms of biological role, catalyzes the reversible transfer of the terminal phosphate group between ATP and AMP. Plays an important role in cellular energy homeostasis and in adenine nucleotide metabolism. This chain is Adenylate kinase, found in Azobacteroides pseudotrichonymphae genomovar. CFP2.